Here is a 98-residue protein sequence, read N- to C-terminus: Large ribosomal subunit protein uL23 (98 aa).

This sequence belongs to the universal ribosomal protein uL23 family. As to quaternary structure, part of the 50S ribosomal subunit. Contacts protein L29, and trigger factor when it is bound to the ribosome.

One of the early assembly proteins it binds 23S rRNA. One of the proteins that surrounds the polypeptide exit tunnel on the outside of the ribosome. Forms the main docking site for trigger factor binding to the ribosome. This is Large ribosomal subunit protein uL23 from Marinomonas sp. (strain MWYL1).